The primary structure comprises 185 residues: Elongation factor P (185 aa).

It belongs to the elongation factor P family.

The protein localises to the cytoplasm. It functions in the pathway protein biosynthesis; polypeptide chain elongation. Functionally, involved in peptide bond synthesis. Stimulates efficient translation and peptide-bond synthesis on native or reconstituted 70S ribosomes in vitro. Probably functions indirectly by altering the affinity of the ribosome for aminoacyl-tRNA, thus increasing their reactivity as acceptors for peptidyl transferase. The sequence is that of Elongation factor P from Bacillus cereus (strain B4264).